The sequence spans 328 residues: Cytochrome c biogenesis protein CcsA (328 aa).

The next 8 membrane-spanning stretches (helical) occupy residues 13–33 (ISFS…LVNL), 46–66 (GIII…IYSG), 73–93 (LYES…VSYF), 101–121 (LNAI…SGLL), 146–166 (MILG…LLVI), 234–254 (IISL…VWAN), 263–283 (WDPK…YLHI), and 295–315 (AIVA…VILL).

This sequence belongs to the CcmF/CycK/Ccl1/NrfE/CcsA family. As to quaternary structure, may interact with Ccs1.

It localises to the plastid. It is found in the chloroplast thylakoid membrane. Its function is as follows. Required during biogenesis of c-type cytochromes (cytochrome c6 and cytochrome f) at the step of heme attachment. This is Cytochrome c biogenesis protein CcsA from Crucihimalaya wallichii (Rock-cress).